The chain runs to 272 residues: Phosphate import ATP-binding protein PstB 2 (272 aa).

Residues 26 to 267 (IEINNLCLNY…PIHKQTEDYI (242 aa)) enclose the ABC transporter domain. 58-65 (GPSGCGKS) contacts ATP.

It belongs to the ABC transporter superfamily. Phosphate importer (TC 3.A.1.7) family. The complex is composed of two ATP-binding proteins (PstB), two transmembrane proteins (PstC and PstA) and a solute-binding protein (PstS).

It is found in the cell inner membrane. The enzyme catalyses phosphate(out) + ATP + H2O = ADP + 2 phosphate(in) + H(+). In terms of biological role, part of the ABC transporter complex PstSACB involved in phosphate import. Responsible for energy coupling to the transport system. The sequence is that of Phosphate import ATP-binding protein PstB 2 from Aliivibrio fischeri (strain ATCC 700601 / ES114) (Vibrio fischeri).